The following is a 333-amino-acid chain: NADH-quinone oxidoreductase subunit H (333 aa).

8 helical membrane-spanning segments follow: residues 8–28 (VLAA…YLVW), 75–95 (ILFM…FVTI), 108–128 (IGLL…LLAG), 154–174 (MLIT…IEIV), 191–211 (PGLF…CSLA), 251–271 (IVIG…CPFG), 273–293 (FPGV…FIWI), and 312–332 (ILIP…KVFA).

This sequence belongs to the complex I subunit 1 family. As to quaternary structure, NDH-1 is composed of 14 different subunits. Subunits NuoA, H, J, K, L, M, N constitute the membrane sector of the complex.

The protein localises to the cell inner membrane. It carries out the reaction a quinone + NADH + 5 H(+)(in) = a quinol + NAD(+) + 4 H(+)(out). Its function is as follows. NDH-1 shuttles electrons from NADH, via FMN and iron-sulfur (Fe-S) centers, to quinones in the respiratory chain. The immediate electron acceptor for the enzyme in this species is believed to be ubiquinone. Couples the redox reaction to proton translocation (for every two electrons transferred, four hydrogen ions are translocated across the cytoplasmic membrane), and thus conserves the redox energy in a proton gradient. This subunit may bind ubiquinone. This Desulfotalea psychrophila (strain LSv54 / DSM 12343) protein is NADH-quinone oxidoreductase subunit H.